Reading from the N-terminus, the 300-residue chain is C-4 methylsterol oxidase erg25 (300 aa).

The 137-residue stretch at 140-276 (TLFFFLEDTW…FRWWDAVLKT (137 aa)) folds into the Fatty acid hydroxylase domain. A Histidine box-1 motif is present at residues 154-158 (HRLFH). Positions 167-171 (HKVHH) match the Histidine box-2 motif. The helical transmembrane segment at 186–206 (PLEIILLGAGTVFVPLMWCYF) threads the bilayer. The short motif at 251–257 (HHDYHHM) is the Histidine box-3 element.

This sequence belongs to the sterol desaturase family. In terms of assembly, heterotetramer of erg25, erg26, erg27 and erg28. Erg28 acts as a scaffold to tether erg27 and other 4,4-demethylation-related enzymes, forming a demethylation enzyme complex, in the endoplasmic reticulum. Fe cation is required as a cofactor.

It localises to the endoplasmic reticulum membrane. The enzyme catalyses 4,4-dimethyl-5alpha-cholesta-8,24-dien-3beta-ol + 6 Fe(II)-[cytochrome b5] + 3 O2 + 5 H(+) = 4beta-methylzymosterol-4alpha-carboxylate + 6 Fe(III)-[cytochrome b5] + 4 H2O. It carries out the reaction 4alpha-methylzymosterol + 6 Fe(II)-[cytochrome b5] + 3 O2 + 5 H(+) = 4alpha-carboxyzymosterol + 6 Fe(III)-[cytochrome b5] + 4 H2O. The protein operates within steroid biosynthesis; zymosterol biosynthesis; zymosterol from lanosterol: step 3/6. Its pathway is steroid metabolism; ergosterol biosynthesis. C-4 methylsterol oxidase; part of the third module of ergosterol biosynthesis pathway that includes by the late steps of the pathway. Erg25 is a catalytic component of the C-4 demethylation complex that catalyzes the three-step monooxygenation required for the demethylation of 4,4-dimethyl and 4alpha-methylsterols. The third module or late pathway involves the ergosterol synthesis itself through consecutive reactions that mainly occur in the endoplasmic reticulum (ER) membrane. Firstly, the squalene synthase erg9 catalyzes the condensation of 2 farnesyl pyrophosphate moieties to form squalene, which is the precursor of all steroids. Secondly, squalene is converted into lanosterol by the consecutive action of the squalene epoxidase erg1 and the lanosterol synthase erg7. The lanosterol 14-alpha-demethylase erg11/cyp1 catalyzes C14-demethylation of lanosterol to produce 4,4'-dimethyl cholesta-8,14,24-triene-3-beta-ol. In the next steps, a complex process involving various demethylation, reduction and desaturation reactions catalyzed by the C-14 reductase erg24 and the C-4 demethylation complex erg25-erg26-erg27 leads to the production of zymosterol. Erg28 likely functions in the C-4 demethylation complex reaction by tethering erg26 and Erg27 to the endoplasmic reticulum or to facilitate interaction between these proteins. Then, the sterol 24-C-methyltransferase erg6 catalyzes the methyl transfer from S-adenosyl-methionine to the C-24 of zymosterol to form fecosterol. The C-8 sterol isomerase erg2 catalyzes the reaction which results in unsaturation at C-7 in the B ring of sterols and thus converts fecosterol to episterol. The sterol-C5-desaturases erg31 and erg32 then catalyze the introduction of a C-5 double bond in the B ring to produce 5-dehydroepisterol. The C-22 sterol desaturase erg5 further converts 5-dehydroepisterol into ergosta-5,7,22,24(28)-tetraen-3beta-ol by forming the C-22(23) double bond in the sterol side chain. Finally, ergosta-5,7,22,24(28)-tetraen-3beta-ol is substrate of the C-24(28) sterol reductase erg4 to produce ergosterol. In the genus Schizosaccharomyces, a second route exists between lanosterol and fecosterol, via the methylation of lanosterol to eburicol by erg6, followed by C14-demethylation by erg11/cyp1 and C4-demethylation by the demethylation complex erg25-erg26-erg27. This is C-4 methylsterol oxidase erg25 from Schizosaccharomyces pombe (strain 972 / ATCC 24843) (Fission yeast).